The primary structure comprises 616 residues: Chaperone protein HscA homolog (616 aa).

This sequence belongs to the heat shock protein 70 family.

Chaperone involved in the maturation of iron-sulfur cluster-containing proteins. Has a low intrinsic ATPase activity which is markedly stimulated by HscB. The sequence is that of Chaperone protein HscA homolog from Vibrio atlanticus (strain LGP32) (Vibrio splendidus (strain Mel32)).